A 444-amino-acid polypeptide reads, in one-letter code: Chromosome partition protein MukF (444 aa).

The leucine-zipper stretch occupies residues 212 to 240 (LDETSGNLRELQDTLNAAGDKLQAQLLRI).

The protein belongs to the MukF family. As to quaternary structure, interacts, and probably forms a ternary complex, with MukE and MukB via its C-terminal region. The complex formation is stimulated by calcium or magnesium. It is required for an interaction between MukE and MukB.

It is found in the cytoplasm. The protein localises to the nucleoid. Functionally, involved in chromosome condensation, segregation and cell cycle progression. May participate in facilitating chromosome segregation by condensation DNA from both sides of a centrally located replisome during cell division. Not required for mini-F plasmid partitioning. Probably acts via its interaction with MukB and MukE. Overexpression results in anucleate cells. It has a calcium binding activity. The sequence is that of Chromosome partition protein MukF from Haemophilus influenzae (strain ATCC 51907 / DSM 11121 / KW20 / Rd).